The chain runs to 491 residues: Ketol-acid reductoisomerase (NADP(+)) (491 aa).

Positions 15 to 208 (AQLGKCRFMG…GGHRAGVLES (194 aa)) constitute a KARI N-terminal Rossmann domain. NADP(+)-binding positions include 45–48 (CGAQ), R68, R76, S78, and 108–110 (DKQ). H132 is a catalytic residue. G158 contacts NADP(+). KARI C-terminal knotted domains lie at 209–344 (SFVA…TAPQ) and 345–484 (YEGK…MTDM). Mg(2+)-binding residues include D217, E221, E389, and E393. S414 lines the substrate pocket.

It belongs to the ketol-acid reductoisomerase family. Mg(2+) serves as cofactor.

It catalyses the reaction (2R)-2,3-dihydroxy-3-methylbutanoate + NADP(+) = (2S)-2-acetolactate + NADPH + H(+). The enzyme catalyses (2R,3R)-2,3-dihydroxy-3-methylpentanoate + NADP(+) = (S)-2-ethyl-2-hydroxy-3-oxobutanoate + NADPH + H(+). It functions in the pathway amino-acid biosynthesis; L-isoleucine biosynthesis; L-isoleucine from 2-oxobutanoate: step 2/4. The protein operates within amino-acid biosynthesis; L-valine biosynthesis; L-valine from pyruvate: step 2/4. Functionally, involved in the biosynthesis of branched-chain amino acids (BCAA). Catalyzes an alkyl-migration followed by a ketol-acid reduction of (S)-2-acetolactate (S2AL) to yield (R)-2,3-dihydroxy-isovalerate. In the isomerase reaction, S2AL is rearranged via a Mg-dependent methyl migration to produce 3-hydroxy-3-methyl-2-ketobutyrate (HMKB). In the reductase reaction, this 2-ketoacid undergoes a metal-dependent reduction by NADPH to yield (R)-2,3-dihydroxy-isovalerate. This Klebsiella pneumoniae (strain 342) protein is Ketol-acid reductoisomerase (NADP(+)).